We begin with the raw amino-acid sequence, 848 residues long: Adenylate cyclase (848 aa).

The catalytic stretch occupies residues 1–535 (MYLYIETLKQ…DVSHHFPLRL (535 aa)). Positions 541–848 (KALYSPCEIR…DAPLLQQYFS (308 aa)) are regulatory. Residue H609 is modified to Phosphohistidine; by CRR.

The protein belongs to the adenylyl cyclase class-1 family.

It is found in the cytoplasm. It carries out the reaction ATP = 3',5'-cyclic AMP + diphosphate. The protein is Adenylate cyclase (cyaA) of Escherichia coli O6:H1 (strain CFT073 / ATCC 700928 / UPEC).